The sequence spans 300 residues: Alpha-ketoglutarate-dependent dioxygenase alkB homolog 4 (300 aa).

At A2 the chain carries N-acetylalanine. The region spanning 148-272 (PVEQCNLDYS…RVCATFRELS (125 aa)) is the Fe2OG dioxygenase domain. Fe cation is bound by residues H167, D169, and H252. Residue R263 coordinates 2-oxoglutarate.

The protein belongs to the alkB family. As to quaternary structure, interacts with ZFHX3, MLLT3, MLLT1, HSF4, EP300, TES, EIF3C, MTMR6 and PSMA6. The cofactor is Fe(2+).

Its subcellular location is the cytoplasm. The protein localises to the nucleus. It is found in the nucleolus. It localises to the midbody. It carries out the reaction an N(6)-methyl-2'-deoxyadenosine in DNA + 2-oxoglutarate + O2 = a 2'-deoxyadenosine in DNA + formaldehyde + succinate + CO2. It catalyses the reaction N(6)-methyl-L-lysyl-[protein] + 2-oxoglutarate + O2 = L-lysyl-[protein] + formaldehyde + succinate + CO2. In terms of biological role, dioxygenase that mediates demethylation of actin monomethylated at 'Lys-84' (K84me1), thereby acting as a regulator of actomyosin-processes. Demethylation of actin K84me1 is required for maintaining actomyosin dynamics supporting normal cleavage furrow ingression during cytokinesis and cell migration. In addition to proteins, also demethylates DNA: specifically demethylates DNA methylated on the 6th position of adenine (N(6)-methyladenosine) DNA, thereby regulating Polycomb silencing. The protein is Alpha-ketoglutarate-dependent dioxygenase alkB homolog 4 of Mus musculus (Mouse).